We begin with the raw amino-acid sequence, 372 residues long: Fatty acid 2-hydroxylase (372 aa).

The Cytochrome b5 heme-binding domain occupies alanine 8–arginine 86. Histidine 43 and histidine 69 together coordinate heme. 2 helical membrane passes run valine 168–tyrosine 188 and serine 213–isoleucine 233. Residues phenylalanine 219–threonine 361 enclose the Fatty acid hydroxylase domain. Positions 234, 239, 257, 260, and 261 each coordinate Zn(2+). 2 consecutive transmembrane segments (helical) span residues valine 271–isoleucine 291 and leucine 292–aspartate 312. The Zn(2+) site is built by histidine 315, histidine 319, histidine 336, histidine 339, and histidine 340.

The protein belongs to the sterol desaturase family. SCS7 subfamily. Zn(2+) serves as cofactor.

The protein localises to the endoplasmic reticulum membrane. It localises to the microsome membrane. It catalyses the reaction a 1,2-saturated fatty acid + 2 Fe(II)-[cytochrome b5] + O2 + 2 H(+) = a (R)-2-hydroxy fatty acid + 2 Fe(III)-[cytochrome b5] + H2O. The catalysed reaction is hexadecanoate + 2 Fe(II)-[cytochrome b5] + O2 + 2 H(+) = (R)-2-hydroxyhexadecanoate + 2 Fe(III)-[cytochrome b5] + H2O. It carries out the reaction octadecanoate + 2 Fe(II)-[cytochrome b5] + O2 + 2 H(+) = (R)-2-hydroxyoctadecanoate + 2 Fe(III)-[cytochrome b5] + H2O. The enzyme catalyses docosanoate + 2 Fe(II)-[cytochrome b5] + O2 + 2 H(+) = 2-hydroxydocosanoate + 2 Fe(III)-[cytochrome b5] + H2O. It catalyses the reaction tetracosanoate + 2 Fe(II)-[cytochrome b5] + O2 + 2 H(+) = (R)-2-hydroxytetracosanoate + 2 Fe(III)-[cytochrome b5] + H2O. The protein operates within lipid metabolism; fatty acid metabolism. It functions in the pathway sphingolipid metabolism; galactosylceramide biosynthesis. In terms of biological role, catalyzes the hydroxylation of free fatty acids at the C-2 position to produce 2-hydroxy fatty acids, which are building blocks of sphingolipids and glycosphingolipids common in neural tissue and epidermis. FA2H is stereospecific for the production of (R)-2-hydroxy fatty acids. Plays an essential role in the synthesis of galactosphingolipids of the myelin sheath. Responsible for the synthesis of sphingolipids and glycosphingolipids involved in the formation of epidermal lamellar bodies critical for skin permeability barrier. Participates in the synthesis of glycosphingolipids and a fraction of type II wax diesters in sebaceous gland, specifically regulating hair follicle homeostasis. Involved in the synthesis of sphingolipids of plasma membrane rafts, controlling lipid raft mobility and trafficking of raft-associated proteins. The polypeptide is Fatty acid 2-hydroxylase (FA2H) (Macaca fascicularis (Crab-eating macaque)).